The following is a 145-amino-acid chain: Large ribosomal subunit protein uL16 (145 aa).

This sequence belongs to the universal ribosomal protein uL16 family. In terms of assembly, part of the 50S ribosomal subunit.

Binds 23S rRNA and is also seen to make contacts with the A and possibly P site tRNAs. The sequence is that of Large ribosomal subunit protein uL16 from Desulfitobacterium hafniense (strain DSM 10664 / DCB-2).